A 783-amino-acid polypeptide reads, in one-letter code: Polyribonucleotide nucleotidyltransferase 1, mitochondrial (783 aa).

Residues 1-45 (MAACRYCCSCLRLRPLSDGPFLLPRRDRALTQLQVRALWSSAGSR) constitute a mitochondrion transit peptide. Residues Lys250, Lys264, Lys285, and Lys289 each carry the N6-acetyllysine modification. N6-succinyllysine is present on Lys552. Residues 605 to 664 (PVVETVQVPLSKRAKFVGPGGYNLKKLQAETGVTISQVDEETFSVFAPTPSAMHEARDFI) enclose the KH domain. Residues 679-750 (GAVYTATITE…ADGRMRLSRK (72 aa)) form the S1 motif domain. A phosphoserine mark is found at Ser754 and Ser782.

It belongs to the polyribonucleotide nucleotidyltransferase family. As to quaternary structure, homotrimer; in free form. Homooligomer. Component of the mitochondrial degradosome (mtEXO) complex which is a heteropentamer containing 2 copies of SUPV3L1 and 3 copies of PNPT1. As part of the mitochondrial degradosome complex, interacts with GRSF1 in an RNA-dependent manner; the interaction enhances the activity of the complex. Interacts with TCL1A; the interaction has no effect on PNPT1 exonuclease activity.

Its subcellular location is the cytoplasm. It is found in the mitochondrion matrix. The protein resides in the mitochondrion intermembrane space. It catalyses the reaction RNA(n+1) + phosphate = RNA(n) + a ribonucleoside 5'-diphosphate. Its function is as follows. RNA-binding protein implicated in numerous RNA metabolic processes. Catalyzes the phosphorolysis of single-stranded polyribonucleotides processively in the 3'-to-5' direction. Mitochondrial intermembrane factor with RNA-processing exoribonulease activity. Component of the mitochondrial degradosome (mtEXO) complex, that degrades 3' overhang double-stranded RNA with a 3'-to-5' directionality in an ATP-dependent manner. Involved in the degradation of non-coding mitochondrial transcripts (MT-ncRNA) and tRNA-like molecules. Required for correct processing and polyadenylation of mitochondrial mRNAs. Plays a role as a cytoplasmic RNA import factor that mediates the translocation of small RNA components, like the 5S RNA, the RNA subunit of ribonuclease P and the mitochondrial RNA-processing (MRP) RNA, into the mitochondrial matrix. Plays a role in mitochondrial morphogenesis and respiration; regulates the expression of the electron transport chain (ETC) components at the mRNA and protein levels. In the cytoplasm, shows a 3'-to-5' exoribonuclease mediating mRNA degradation activity; degrades c-myc mRNA upon treatment with IFNB1/IFN-beta, resulting in a growth arrest in melanoma cells. Regulates the stability of specific mature miRNAs in melanoma cells; specifically and selectively degrades miR-221, preferentially. Also plays a role in RNA cell surveillance by cleaning up oxidized RNAs. Binds to the RNA subunit of ribonuclease P, MRP RNA and miR-221 microRNA. The sequence is that of Polyribonucleotide nucleotidyltransferase 1, mitochondrial from Homo sapiens (Human).